The sequence spans 547 residues: Mitogen-activated protein kinase 15 (547 aa).

The ubiquitin-conjugating stretch occupies residues 1 to 20 (MCAAEVDRHVSQRYLIKRRL). The 292-residue stretch at 14 to 305 (YLIKRRLGKG…AEQALQHPYV (292 aa)) folds into the Protein kinase domain. ATP contacts are provided by residues 20 to 28 (LGKGAYGIV) and K43. D138 serves as the catalytic Proton acceptor. At T176 the chain carries Phosphothreonine. A TXY motif is present at residues 176–178 (TEY). Phosphotyrosine is present on Y178. The tract at residues 266–286 (LDALLPPDTPPEALDLLKRLL) is necessary to interact with ESRRA, to regulate its subcellular localization and to inhibit its transcriptional activity. The interval 301–380 (QHPYVQRFHC…SQRQSLKPGV (80 aa)) is requires for interaction with GABARAP, MAP1LC3B AND GABARAPL1. The interval 370-503 (ASQRQSLKPG…EAPEPRPGRR (134 aa)) is disordered. PXXXP motif repeat units lie at residues 378 to 382 (PGVLP) and 385 to 389 (LAETP). 2 PXXXP motif; regulates binding with chromatin and interaction with PCNA repeats span residues 393–397 (RGPKP) and 401–405 (HGHDP). The segment covering 401–414 (HGHDPEHVEVRRQS) has biased composition (basic and acidic residues). R449 carries the post-translational modification Omega-N-methylarginine. A compositionally biased stretch (polar residues) spans 454–465 (SLTSQAAAQAAN). Residues 481–490 (AVGARRVPSR) show a composition bias toward low complexity. Residues 491-500 (LPREAPEPRP) show a composition bias toward basic and acidic residues.

It belongs to the protein kinase superfamily. CMGC Ser/Thr protein kinase family. MAP kinase subfamily. Interacts with CSK/c-Src, ABL1, RET and TGFB1I1. Interacts with GABARAP, MAP1LC3B and GABARAPL1; controls, in a kinase-dependent fashion, both basal and starvation-induced autophagy. Interacts with ESRRA; promotes re-localization of ESRRA to the cytoplasm through a XPO1-dependent mechanism then inhibits ESRRA transcriptional activity. Interacts with PCNA; the interaction is chromatin binding- and kinase activity-dependent and prevents MDM2-mediated PCNA destruction by inhibiting the association of PCNA with MDM2. Interacts with DVL2. Interacts with CLIC3; MAPK15 does not phosphorylates CLIC3. Post-translationally, autophosphorylated on Thr-176 and Tyr-178; activates the enzyme. Dephosphorylated by PTPN1. In terms of processing, ubiquitinated. Ubiquitination may allow its tight kinase activity regulation and rapid turnover. May be ubiquitinated by a SCF E3 ligase. In terms of tissue distribution, ubiquitously expressed at a weak level. Highest expression is found in testis and to a lower extent in lung.

The protein resides in the cytoplasm. It is found in the cytoskeleton. The protein localises to the cilium basal body. Its subcellular location is the cell junction. It localises to the tight junction. The protein resides in the microtubule organizing center. It is found in the centrosome. The protein localises to the centriole. Its subcellular location is the cytoplasmic vesicle. It localises to the autophagosome. The protein resides in the golgi apparatus. It is found in the nucleus. The protein localises to the spindle. The catalysed reaction is L-seryl-[protein] + ATP = O-phospho-L-seryl-[protein] + ADP + H(+). It carries out the reaction L-threonyl-[protein] + ATP = O-phospho-L-threonyl-[protein] + ADP + H(+). Its activity is regulated as follows. Activated by threonine and tyrosine phosphorylation. Inhibited by dual specificity phosphatases, such as DUSP1. Phosphorylation and activation in response to DNA damaging agents, serum stimulation. Constitutively activated when phosphorylated on Tyr-178. Activity depends on the relative rates of MAPK15 autophosphorylation and dephosphorylation by PTPN1. Functionally, atypical MAPK protein that regulates several process such as autophagy, ciliogenesis, protein trafficking/secretion and genome integrity, in a kinase activity-dependent manner. Controls both, basal and starvation-induced autophagy throught its interaction with GABARAP, MAP1LC3B and GABARAPL1 leading to autophagosome formation, SQSTM1 degradation and reduced MAP1LC3B inhibitory phosphorylation. Regulates primary cilium formation and the localization of ciliary proteins involved in cilium structure, transport, and signaling. Prevents the relocation of the sugar-adding enzymes from the Golgi to the endoplasmic reticulum, thereby restricting the production of sugar-coated proteins. Upon amino-acid starvation, mediates transitional endoplasmic reticulum site disassembly and inhibition of secretion. Binds to chromatin leading to MAPK15 activation and interaction with PCNA, that which protects genomic integrity by inhibiting MDM2-mediated degradation of PCNA. Regulates DA transporter (DAT) activity and protein expression via activation of RhoA. In response to H(2)O(2) treatment phosphorylates ELAVL1, thus preventing it from binding to the PDCD4 3'UTR and rendering the PDCD4 mRNA accessible to miR-21 and leading to its degradation and loss of protein expression. Also functions in a kinase activity-independent manner as a negative regulator of growth. Phosphorylates in vitro FOS and MBP. During oocyte maturation, plays a key role in the microtubule organization and mei- otic cell cycle progression in oocytes, fertilized eggs, and early embryos. Interacts with ESRRA promoting its re-localization from the nucleus to the cytoplasm and then prevents its transcriptional activity. This is Mitogen-activated protein kinase 15 (Mapk15) from Rattus norvegicus (Rat).